The sequence spans 279 residues: Zinc finger AN1 and C2H2 domain-containing stress-associated protein 11 (279 aa).

2 AN1-type zinc fingers span residues 7–55 and 95–145; these read PDLG…REDV and ATKK…KLPF. Cysteine 13, cysteine 18, cysteine 28, cysteine 31, cysteine 36, histidine 39, histidine 45, cysteine 47, cysteine 101, cysteine 106, cysteine 118, cysteine 121, cysteine 126, histidine 129, histidine 135, and cysteine 137 together coordinate Zn(2+). The interval 152–178 is disordered; that stretch reads STTRKEAKTTRPNKAHPSTSSSSSSSR. Positions 169 to 178 are enriched in low complexity; it reads STSSSSSSSR. 2 C2H2-type zinc fingers span residues 213–236 and 250–273; these read EVCPQCGAKFSSVTSLVEHVEKTH and DVCPRCSRGFRDPVDLVNHIERDH.

Functionally, may be involved in environmental stress response. This Arabidopsis thaliana (Mouse-ear cress) protein is Zinc finger AN1 and C2H2 domain-containing stress-associated protein 11 (SAP11).